Consider the following 547-residue polypeptide: Alpha-1,3-mannosyl-glycoprotein 4-beta-N-acetylglucosaminyltransferase B (547 aa).

At 1 to 7 (MRLRNGT) the chain is on the cytoplasmic side. Residues 8–28 (FLTVLLFGLCGLISLSWYTAF) form a helical; Signal-anchor for type II membrane protein membrane-spanning segment. Residues 29–547 (SNSKGNVVDI…LSEIFIKKAE (519 aa)) lie on the Lumenal side of the membrane. Residues 36 to 83 (VDIYQREFLALRDRLHSAEQENLKRSKELNLVLDEIKRAIAEKQALRD) are a coiled coil. Asn85, Asn101, and Asn464 each carry an N-linked (GlcNAc...) asparagine glycan.

Belongs to the glycosyltransferase 54 family. It depends on a divalent metal cation as a cofactor. N-glycosylated.

The protein resides in the golgi apparatus membrane. It catalyses the reaction N(4)-{beta-D-GlcNAc-(1-&gt;2)-alpha-D-Man-(1-&gt;3)-[beta-D-GlcNAc-(1-&gt;2)-alpha-D-Man-(1-&gt;6)]-beta-D-Man-(1-&gt;4)-beta-D-GlcNAc-(1-&gt;4)-beta-D-GlcNAc}-L-asparaginyl-[protein] + UDP-N-acetyl-alpha-D-glucosamine = N(4)-{beta-D-GlcNAc-(1-&gt;2)-[beta-D-GlcNAc-(1-&gt;4)]-alpha-D-Man-(1-&gt;3)-[beta-D-GlcNAc-(1-&gt;2)-alpha-D-Man-(1-&gt;6)]-beta-D-Man-(1-&gt;4)-beta-D-GlcNAc-(1-&gt;4)-beta-D-GlcNAc}-L-asparaginyl-[protein] + UDP + H(+). The enzyme catalyses an N(4)-{beta-D-GlcNAc-(1-&gt;2)-alpha-D-Man-(1-&gt;3)-[alpha-D-Man-(1-&gt;6)]-beta-D-Man-(1-&gt;4)-beta-D-GlcNAc-(1-&gt;4)-beta-D-GlcNAc}-L-asparaginyl-[protein] + UDP-N-acetyl-alpha-D-glucosamine = an N(4)-{beta-D-GlcNAc-(1-&gt;2)-[beta-D-GlcNAc-(1-&gt;4)]-alpha-D-Man-(1-&gt;3)-[alpha-D-Man-(1-&gt;6)]-beta-D-Man-(1-&gt;4)-beta-D-GlcNAc-(1-&gt;4)-beta-D-GlcNAc}-L-asparaginyl-[protein] + UDP + H(+). The catalysed reaction is an N(4)-{beta-D-GlcNAc-(1-&gt;2)-alpha-D-Man-(1-&gt;3)-[beta-D-GlcNAc-(1-&gt;2)-[beta-D-GlcNAc-(1-&gt;6)]-alpha-D-Man-(1-&gt;6)]-beta-D-Man-(1-&gt;4)-beta-D-GlcNAc-(1-&gt;4)-beta-D-GlcNAc}-L-asparaginyl-[protein] + UDP-N-acetyl-alpha-D-glucosamine = an N(4)-{beta-D-GlcNAc-(1-&gt;2)-[beta-D-GlcNAc-(1-&gt;4)]-alpha-D-Man-(1-&gt;3)-[beta-D-GlcNAc-(1-&gt;2)-[beta-D-GlcNAc-(1-&gt;6)]-alpha-D-Man-(1-&gt;6)]-beta-D-Man-(1-&gt;4)-beta-D-GlcNAc-(1-&gt;4)-beta-D-GlcNAc}-L-asparaginyl-[protein] + UDP + H(+). It carries out the reaction an N(4)-{beta-D-GlcNAc-(1-&gt;2)-alpha-D-Man-(1-&gt;3)-[beta-D-GlcNAc-(1-&gt;2)-alpha-D-Man-(1-&gt;6)]-beta-D-Man-(1-&gt;4)-beta-D-GlcNAc-(1-&gt;4)-[alpha-L-Fuc-(1-&gt;6)]-beta-D-GlcNAc}-L-asparaginyl-[protein] + UDP-N-acetyl-alpha-D-glucosamine = N(4)-{beta-D-GlcNAc-(1-&gt;2)-[beta-D-GlcNAc-(1-&gt;4)]-alpha-D-Man-(1-&gt;3)-[beta-D-GlcNAc-(1-&gt;2)-alpha-D-Man-(1-&gt;6)]-beta-D-Man-(1-&gt;4)-beta-D-GlcNAc-(1-&gt;4)-[alpha-L-Fuc-(1-&gt;6)]-beta-D-GlcNAc}-asparaginyl-[protein] + UDP + H(+). It catalyses the reaction an N(4)-{beta-D-GlcNAc-(1-&gt;2)-alpha-D-Man-(1-&gt;3)-[beta-D-Gal-(1-&gt;4)-beta-D-GlcNAc-(1-&gt;2)-alpha-D-Man-(1-&gt;6)]-beta-D-Man-(1-&gt;4)-beta-D-GlcNAc-(1-&gt;4)-beta-D-GlcNAc}-L-asparaginyl-[protein] + UDP-N-acetyl-alpha-D-glucosamine = an N(4)-{beta-D-GlcNAc-(1-&gt;2)-[beta-D-GlcNAc-(1-&gt;4)]-alpha-D-Man-(1-&gt;3)-[beta-D-Gal-(1-&gt;4)-beta-D-GlcNAc-(1-&gt;2)-alpha-D-Man-(1-&gt;6)]-beta-D-Man-(1-&gt;4)-beta-D-GlcNAc-(1-&gt;4)-beta-D-GlcNAc}-L-asparaginyl-[protein] + UDP + H(+). The enzyme catalyses N(4)-{beta-D-GlcNAc-(1-&gt;2)-alpha-D-Man-(1-&gt;3)-[alpha-D-Man-(1-&gt;3)-{alpha-D-Man-(1-&gt;6)}-alpha-D-Man-(1-&gt;6)]-beta-D-Man-(1-&gt;4)-beta-D-GlcNAc-(1-&gt;4)-beta-D-GlcNAc}-asparaginyl-[protein] + UDP-N-acetyl-alpha-D-glucosamine = N(4)-{beta-D-GlcNAc-(1-&gt;2)-[beta-D-GlcNAc-(1-&gt;4)]-alpha-D-Man-(1-&gt;3)-[alpha-D-Man-(1-&gt;3)-{alpha-D-Man-(1-&gt;6)}-alpha-D-Man-(1-&gt;6)]-beta-D-Man-(1-&gt;4)-beta-D-GlcNAc-(1-&gt;4)-beta-D-GlcNAc}-asparaginyl-[protein] + UDP + H(+). The catalysed reaction is N(4)-{beta-D-GlcNAc-(1-&gt;2)-alpha-D-Man-(1-&gt;3)-beta-D-Man-(1-&gt;4)-beta-D-GlcNAc-(1-&gt;4)-beta-D-GlcNAc}-asparaginyl-[protein] + UDP-N-acetyl-alpha-D-glucosamine = N(4)-{beta-D-GlcNAc-(1-&gt;2)-[beta-D-GlcNAc-(1-&gt;4)]-alpha-D-Man-(1-&gt;3)-beta-D-Man-(1-&gt;4)-beta-D-GlcNAc-(1-&gt;4)-beta-D-GlcNAc}-asparaginyl-[protein] + UDP + H(+). Its pathway is protein modification; protein glycosylation. In terms of biological role, glycosyltransferase that catalyze the transfer of GlcNAc from UDP-GlcNAc to the GlcNAcbeta1-2Manalpha1-3 arm of the core structure of N-linked glycans through a beta1-4 linkage and participates in the production of tri- and tetra-antennary N-linked sugar chains. Prefers complex-type N-glycans over hybrid-types. Has lower affinities for donors or acceptors than MGAT4A, suggesting that, under physiological conditions, it is not the main contributor in N-glycan biosynthesis. The polypeptide is Alpha-1,3-mannosyl-glycoprotein 4-beta-N-acetylglucosaminyltransferase B (mgat4bQ9UQ53) (Danio rerio (Zebrafish)).